The chain runs to 186 residues: Dihydrofolate reductase (186 aa).

In terms of domain architecture, DHFR spans 3–184; sequence PLNCIVAVSQ…IKYKFEVYEK (182 aa). NADP(+) is bound by residues A9 and 15–21; that span reads GIGKNGD. 30–35 is a substrate binding site; the sequence is EYKYFQ. K32 is subject to N6-acetyllysine; alternate. N6-succinyllysine; alternate is present on K32. An NADP(+)-binding site is contributed by 54-56; that stretch reads RKT. R70 is a substrate binding site. Residues 76–78 and 116–123 contribute to the NADP(+) site; these read SRE and GGSSVYKE. Residue C162 is modified to Cysteine derivative; partial.

This sequence belongs to the dihydrofolate reductase family. Homodimer.

The protein localises to the mitochondrion. It localises to the cytoplasm. The enzyme catalyses (6S)-5,6,7,8-tetrahydrofolate + NADP(+) = 7,8-dihydrofolate + NADPH + H(+). It functions in the pathway cofactor biosynthesis; tetrahydrofolate biosynthesis; 5,6,7,8-tetrahydrofolate from 7,8-dihydrofolate: step 1/1. Key enzyme in folate metabolism. Contributes to the de novo mitochondrial thymidylate biosynthesis pathway. Catalyzes an essential reaction for de novo glycine and purine synthesis, and for DNA precursor synthesis. Binds its own mRNA and that of DHFR2. This chain is Dihydrofolate reductase (DHFR), found in Sus scrofa (Pig).